The chain runs to 490 residues: Ribosome biogenesis protein YTM1 (490 aa).

Residues Met1 to Gln22 form a disordered region. The interval Val23–Arg104 is ubiquitin-like (UBL) domain. WD repeat units follow at residues Leu116 to Ser168, Gly175 to Ser213, Gly224 to Ala263, Ser298 to Thr338, Thr340 to Ser379, Gly385 to Asp425, and Gly449 to Gly487. The disordered stretch occupies residues Thr255–Ser286.

The protein belongs to the WD repeat WDR12/YTM1 family. As to quaternary structure, component of the NOP7 complex, composed of ERB1, NOP7 and YTM1. The complex is held together by ERB1, which interacts with NOP7 via its N-terminal domain and with YTM1 via a high-affinity interaction between the seven-bladed beta-propeller domains of the 2 proteins. The NOP7 complex associates with the 66S pre-ribosome. Interacts (via UBL domain) with MDN1 (via VWFA/MIDAS domain).

It is found in the nucleus. The protein localises to the nucleolus. Its subcellular location is the nucleoplasm. In terms of biological role, component of the NOP7 complex, which is required for maturation of the 25S and 5.8S ribosomal RNAs and formation of the 60S ribosome. The polypeptide is Ribosome biogenesis protein YTM1 (Ajellomyces capsulatus (strain NAm1 / WU24) (Darling's disease fungus)).